Here is a 292-residue protein sequence, read N- to C-terminus: MFNRIFLFLLTNLAVLMLAGIVMSLLGVNPAQMSGLLVMAAIFGFGGSFISLLLSKFMAKRSTGAQVITEPRTPTERWLLETVRRQAQAAGIGMPEVAVYEGPEINAFATGANRNNALVAVSTGLLQNMDQDEAEAVLGHEIAHVANGDMVTMALLQGVLNTFVIVLARVVGGIIDSTLSGNREGGRGFAYYIIVFALEMVFGLFATMIAMWFSRRREFRADAGGAQLAGRSKMIAALERLSLNHGQNTLPSQVQAFGISGGVGEGLRRLFLSHPPLTERIAALRAASGSAR.

2 consecutive transmembrane segments (helical) span residues 5-25 (IFLFLLTNLAVLMLAGIVMSL) and 34-54 (SGLLVMAAIFGFGGSFISLLL). Residue His-140 coordinates Zn(2+). Glu-141 is a catalytic residue. Zn(2+) is bound at residue His-144. 2 helical membrane passes run 155–175 (LLQGVLNTFVIVLARVVGGII) and 193–213 (IIVFALEMVFGLFATMIAMWF). A Zn(2+)-binding site is contributed by Glu-218.

This sequence belongs to the peptidase M48B family. Zn(2+) is required as a cofactor.

It localises to the cell inner membrane. The protein is Protease HtpX of Xanthomonas axonopodis pv. citri (strain 306).